A 117-amino-acid polypeptide reads, in one-letter code: Fluoride-specific ion channel FluC 2 (117 aa).

Transmembrane regions (helical) follow at residues 1 to 21 (MISI…RSAI), 33 to 53 (LPIA…LTIG), 60 to 80 (WFPA…STLA), and 95 to 115 (LFLN…YIGY). Na(+) is bound by residues Gly71 and Thr74.

It belongs to the fluoride channel Fluc/FEX (TC 1.A.43) family.

The protein resides in the cell membrane. It carries out the reaction fluoride(in) = fluoride(out). With respect to regulation, na(+) is not transported, but it plays an essential structural role and its presence is essential for fluoride channel function. Functionally, fluoride-specific ion channel. Important for reducing fluoride concentration in the cell, thus reducing its toxicity. This chain is Fluoride-specific ion channel FluC 2, found in Staphylococcus aureus (strain COL).